A 307-amino-acid chain; its full sequence is Opsin-like protein carO (307 aa).

The N-linked (GlcNAc...) asparagine glycan is linked to Asn-28. 7 helical membrane-spanning segments follow: residues 36–56, 64–84, 118–138, 140–160, 166–186, 202–222, and 235–255; these read WYWAVCAVMTVSTFAFLGLGM, IFHYITAGITMIASIAYFTMA, WFLTTPLLLTDLLLTAGMPWP, VLWVILVDWVMIVTGLVGALV, WGYFAFGCAALAYIVYVLAWE, FVMCGSLTAVVWILYPIAWGV, and AVFYGILDLIAKPVFGALLLW. The disordered stretch occupies residues 280-307; the sequence is GPNNKVASGHGARNDTATASGSNVNPNA. Residue Asn-293 is glycosylated (N-linked (GlcNAc...) asparagine). The segment covering 294-307 has biased composition (polar residues); the sequence is DTATASGSNVNPNA.

Belongs to the archaeal/bacterial/fungal opsin family.

The protein localises to the membrane. Opsin-like protein; part of the car gene cluster that mediates the biosynthesis of neurosporaxanthin, a carboxylic apocarotenoid acting as an essential protective pigment and leading to orange pigmentation. The exact role of carO in carotenoid biosynthesis is not known yet, but it could be involved in the regulation of the pathway by light or other stimuli. This Fusarium fujikuroi (Bakanae and foot rot disease fungus) protein is Opsin-like protein carO.